Consider the following 437-residue polypeptide: 26S proteasome subunit RPT4 (437 aa).

Residues 1–51 form a disordered region; it reads MSEEQDPLLAGLGETSGDNHTQQSHEQQPEQPQETEEHHEEEPSRVDPEQE. Ser2 is modified (N-acetylserine). A compositionally biased stretch (low complexity) spans 20–32; sequence HTQQSHEQQPEQP. Positions 35 to 51 are enriched in basic and acidic residues; the sequence is TEEHHEEEPSRVDPEQE. Position 222 to 229 (222 to 229) interacts with ATP; the sequence is GPPGTGKT.

This sequence belongs to the AAA ATPase family. N-acetylated by NAT1.

Its function is as follows. The 26S proteasome is involved in the ATP-dependent degradation of ubiquitinated proteins. The regulatory (or ATPase) complex confers ATP dependency and substrate specificity to the 26S complex. The polypeptide is 26S proteasome subunit RPT4 (RPT4) (Saccharomyces cerevisiae (strain ATCC 204508 / S288c) (Baker's yeast)).